We begin with the raw amino-acid sequence, 33 residues long: Pardaxin P-2 (33 aa).

It belongs to the pardaxin family. In aqueous solution exists as a tetramer.

It localises to the secreted. The protein resides in the target cell membrane. Functionally, exhibits unusual shark repellent and surfactant properties. Forms voltage-dependent, ion-permeable channels in membranes. At high concentration causes cell membrane lysis. The polypeptide is Pardaxin P-2 (Pardachirus pavoninus (Peacock sole)).